The sequence spans 331 residues: MEAKPVAIWLFLCSLMVICMVGIGGFTRLSKAGLSITEWKPITGTLPPLSEQDWLKEKSKYEATPEYKAFNYGMSMEEFRTIYLIEYVHRLIARLTGLVFILPFIYFTLKKRIPKNAVIRLSTALLFGILQAFAGWYMVKSGLVSNPHVSHYKLALHLLLALVIFALLSYQFFDYQIKPKQIIKINSNITCYIWIILILVTVQIIFGAFVAGLNAGLIYNTFPLMDGQIVPEDLFYLQPAWLNIFENRVTVQFIHRALALLILVLTAILTIKNASIKPLYVMLFSVIIQVILGIVTLLLHIPMAIAIAHQMFSFILFGSGLYCLRYLRNQI.

Transmembrane regions (helical) follow at residues V6 to F26, Y87 to F107, A124 to V144, L154 to D174, I193 to L213, V251 to I271, L279 to L299, and I301 to L321. H255 contributes to the heme binding site. Position 309 (H309) interacts with heme.

The protein belongs to the COX15/CtaA family. Type 2 subfamily. As to quaternary structure, interacts with CtaB. Requires heme b as cofactor.

The protein localises to the cell membrane. The catalysed reaction is Fe(II)-heme o + 2 A + H2O = Fe(II)-heme a + 2 AH2. The protein operates within porphyrin-containing compound metabolism; heme A biosynthesis; heme A from heme O: step 1/1. In terms of biological role, catalyzes the conversion of heme O to heme A by two successive hydroxylations of the methyl group at C8. The first hydroxylation forms heme I, the second hydroxylation results in an unstable dihydroxymethyl group, which spontaneously dehydrates, resulting in the formyl group of heme A. This chain is Heme A synthase, found in Wolbachia pipientis subsp. Culex pipiens (strain wPip).